The chain runs to 234 residues: uncharacterized protein (234 aa).

Residues 103-211 (LAKKVPFVVC…SHIKIGKSFL (109 aa)) form the tRNA-binding domain.

This is an uncharacterized protein from Mycoplasma pneumoniae (strain ATCC 29342 / M129 / Subtype 1) (Mycoplasmoides pneumoniae).